A 208-amino-acid polypeptide reads, in one-letter code: Uracil phosphoribosyltransferase (208 aa).

5-phospho-alpha-D-ribose 1-diphosphate-binding positions include arginine 78, arginine 103, and 130-138; that span reads DPMLATGGS. Residues isoleucine 193 and 198 to 200 each bind uracil; that span reads GDA. Residue aspartate 199 participates in 5-phospho-alpha-D-ribose 1-diphosphate binding.

This sequence belongs to the UPRTase family. It depends on Mg(2+) as a cofactor.

It catalyses the reaction UMP + diphosphate = 5-phospho-alpha-D-ribose 1-diphosphate + uracil. Its pathway is pyrimidine metabolism; UMP biosynthesis via salvage pathway; UMP from uracil: step 1/1. With respect to regulation, allosterically activated by GTP. Catalyzes the conversion of uracil and 5-phospho-alpha-D-ribose 1-diphosphate (PRPP) to UMP and diphosphate. The sequence is that of Uracil phosphoribosyltransferase from Tolumonas auensis (strain DSM 9187 / NBRC 110442 / TA 4).